The following is a 421-amino-acid chain: Medium-chain specific acyl-CoA dehydrogenase, mitochondrial (421 aa).

A mitochondrion-targeting transit peptide spans 1 to 25 (MAAAFGRCCRVLRSISRFHWRSQHT). At lysine 69 the chain carries N6-acetyllysine; alternate. N6-succinyllysine; alternate is present on lysine 69. FAD is bound at residue 158-167 (YCVTEPGAGS). Serine 167 provides a ligand contact to octanoyl-CoA. Lysine 179 bears the N6-succinyllysine mark. Residue 191 to 193 (WIT) participates in FAD binding. N6-acetyllysine; alternate occurs at positions 212, 217, 259, and 271. An N6-succinyllysine; alternate mark is found at lysine 212, lysine 217, lysine 259, and lysine 271. Aspartate 278 is an octanoyl-CoA binding site. Position 279 is an N6-acetyllysine (lysine 279). Arginine 281 lines the octanoyl-CoA pocket. Lysine 301 is subject to N6-acetyllysine. FAD contacts are provided by residues 306-308 (RKT) and 316-317 (HQ). Positions 349 and 351 each coordinate octanoyl-CoA. The residue at position 351 (threonine 351) is a Phosphothreonine. 374-378 (QIFGG) contacts FAD. Octanoyl-CoA is bound at residue glutamate 401. Glutamate 401 (proton acceptor) is an active-site residue. 402–405 (GTSQ) contributes to the FAD binding site.

This sequence belongs to the acyl-CoA dehydrogenase family. As to quaternary structure, homotetramer. Interacts with the heterodimeric electron transfer flavoprotein ETF. FAD is required as a cofactor. Acetylated. Could occur at proximity of the cofactor-binding sites and reduce the catalytic activity. Could be deacetylated by SIRT3.

Its subcellular location is the mitochondrion matrix. It carries out the reaction a medium-chain 2,3-saturated fatty acyl-CoA + oxidized [electron-transfer flavoprotein] + H(+) = a medium-chain (2E)-enoyl-CoA + reduced [electron-transfer flavoprotein]. The catalysed reaction is pentanoyl-CoA + oxidized [electron-transfer flavoprotein] + H(+) = (2E)-pentenoyl-CoA + reduced [electron-transfer flavoprotein]. The enzyme catalyses hexanoyl-CoA + oxidized [electron-transfer flavoprotein] + H(+) = (2E)-hexenoyl-CoA + reduced [electron-transfer flavoprotein]. It catalyses the reaction octanoyl-CoA + oxidized [electron-transfer flavoprotein] + H(+) = (2E)-octenoyl-CoA + reduced [electron-transfer flavoprotein]. It carries out the reaction decanoyl-CoA + oxidized [electron-transfer flavoprotein] + H(+) = (2E)-decenoyl-CoA + reduced [electron-transfer flavoprotein]. The catalysed reaction is dodecanoyl-CoA + oxidized [electron-transfer flavoprotein] + H(+) = (2E)-dodecenoyl-CoA + reduced [electron-transfer flavoprotein]. The enzyme catalyses tetradecanoyl-CoA + oxidized [electron-transfer flavoprotein] + H(+) = (2E)-tetradecenoyl-CoA + reduced [electron-transfer flavoprotein]. It catalyses the reaction oxidized [electron-transfer flavoprotein] + hexadecanoyl-CoA + H(+) = (2E)-hexadecenoyl-CoA + reduced [electron-transfer flavoprotein]. It participates in lipid metabolism; mitochondrial fatty acid beta-oxidation. Functionally, medium-chain specific acyl-CoA dehydrogenase is one of the acyl-CoA dehydrogenases that catalyze the first step of mitochondrial fatty acid beta-oxidation, an aerobic process breaking down fatty acids into acetyl-CoA and allowing the production of energy from fats. The first step of fatty acid beta-oxidation consists in the removal of one hydrogen from C-2 and C-3 of the straight-chain fatty acyl-CoA thioester, resulting in the formation of trans-2-enoyl-CoA. Electron transfer flavoprotein (ETF) is the electron acceptor that transfers electrons to the main mitochondrial respiratory chain via ETF-ubiquinone oxidoreductase (ETF dehydrogenase). Among the different mitochondrial acyl-CoA dehydrogenases, medium-chain specific acyl-CoA dehydrogenase acts specifically on acyl-CoAs with saturated 6 to 12 carbons long primary chains. The protein is Medium-chain specific acyl-CoA dehydrogenase, mitochondrial of Macaca fascicularis (Crab-eating macaque).